Here is a 295-residue protein sequence, read N- to C-terminus: Protein FAM110A (295 aa).

2 disordered regions span residues 117-148 (PVSP…PPSI) and 160-191 (PASP…KSDL). Pro residues-rich tracts occupy residues 138–147 (LATPPRPPPS) and 160–171 (PASPIQPCPSPG).

This sequence belongs to the FAM110 family. May interact with CSPP1.

The protein localises to the cytoplasm. The protein resides in the cytoskeleton. It is found in the microtubule organizing center. Its subcellular location is the centrosome. It localises to the spindle pole. In Bos taurus (Bovine), this protein is Protein FAM110A (FAM110A).